Consider the following 246-residue polypeptide: MTMDKSELVQKAKLAEQAERYDDMAAAMKAVTEQGHELSNEERNLLSVAYKNVVGARRSSWRVISSIEQKTERNEKKQQMGKEYREKIEAELQDICNDVLQLLDKYLIPNATQPESKVFYLKMKGDYFRYLSEVASGDNKQTTVSNSQQAYQEAFEISKKEMQPTHPIRLGLALNFSVFYYEILNSPEKACSLAKTAFDEAIAELDTLNEESYKDSTLIMQLLRDNLTLWTSENQGDEGDAGEGEN.

The residue at position 1 (Met1) is an N-acetylmethionine. Thr2 is modified (N-acetylthreonine; in 14-3-3 protein beta/alpha, N-terminally processed). A Phosphothreonine modification is found at Thr2. The residue at position 5 (Lys5) is an N6-acetyllysine. The residue at position 51 (Lys51) is an N6-acetyllysine; alternate. Lys51 is covalently cross-linked (Glycyl lysine isopeptide (Lys-Gly) (interchain with G-Cter in SUMO2); alternate). The residue at position 60 (Ser60) is a Phosphoserine. Lys70 bears the N6-acetyllysine mark. A 3'-nitrotyrosine mark is found at Tyr84 and Tyr106. Lys117 carries the N6-acetyllysine modification. A phosphoserine mark is found at Ser186 and Ser232.

This sequence belongs to the 14-3-3 family. In terms of assembly, homodimer. Interacts with SAMSN1 and PRKCE. Interacts with AKAP13. Interacts with SSH1 and TORC2/CRTC2. Interacts with ABL1; the interaction results in cytoplasmic location of ABL1 and inhibition of cABL-mediated apoptosis. Interacts with ROR2 (dimer); the interaction results in phosphorylation of YWHAB on tyrosine residues. Interacts with GAB2. Interacts with YAP1 (phosphorylated form). Interacts with the phosphorylated (by AKT1) form of SRPK2. Interacts with PKA-phosphorylated AANAT. Interacts with MYO1C. Interacts with SIRT2. Interacts with the 'Thr-369' phosphorylated form of DAPK2. Interacts with PI4KB, TBC1D22A and TBC1D22B. Interacts with the 'Ser-1134' and 'Ser-1161' phosphorylated form of SOS1. Interacts (via phosphorylated form) with YWHAB; this interaction occurs in a protein kinase AKT1-dependent manner. Interacts with SLITRK1. Interacts with SYNPO2 (phosphorylated form); YWHAB competes with ACTN2 for interaction with SYNPO2. Interacts with RIPOR2 (via phosphorylated form); this interaction occurs in a chemokine-dependent manner and does not compete for binding of RIPOR2 with RHOA nor blocks inhibition of RIPOR2-mediated RHOA activity. Interacts with MARK2 and MARK3. Interacts with TESK1; the interaction is dependent on the phosphorylation of TESK1 'Ser-439' and inhibits TESK1 kinase activity. Interacts with MEFV. Interacts with HDAC4. Interacts with ADAM22 (via C-terminus). Post-translationally, the alpha, brain-specific form differs from the beta form in being phosphorylated. Phosphorylated on Ser-60 by protein kinase C delta type catalytic subunit in a sphingosine-dependent fashion.

Its subcellular location is the cytoplasm. The protein resides in the melanosome. Adapter protein implicated in the regulation of a large spectrum of both general and specialized signaling pathways. Binds to a large number of partners, usually by recognition of a phosphoserine or phosphothreonine motif. Binding generally results in the modulation of the activity of the binding partner. Negative regulator of osteogenesis. Blocks the nuclear translocation of the phosphorylated form (by AKT1) of SRPK2 and antagonizes its stimulatory effect on cyclin D1 expression resulting in blockage of neuronal apoptosis elicited by SRPK2. Negative regulator of signaling cascades that mediate activation of MAP kinases via AKAP13. The protein is 14-3-3 protein beta/alpha (YWHAB) of Bos taurus (Bovine).